A 142-amino-acid chain; its full sequence is Spliceosomal protein DIB1 (142 aa).

Belongs to the DIM1 family. In terms of assembly, component of the 25S [U4/U6.U5] tri-snRNP.

It is found in the nucleus. In terms of biological role, essential role in pre-mRNA splicing. Also essential for entry into mitosis (G2/M progression) as well as for chromosome segregation during mitosis. In Candida glabrata (strain ATCC 2001 / BCRC 20586 / JCM 3761 / NBRC 0622 / NRRL Y-65 / CBS 138) (Yeast), this protein is Spliceosomal protein DIB1 (DIB1).